The sequence spans 322 residues: SUMO-activating enzyme subunit 1A (322 aa).

The residue at position 1 (methionine 1) is an N-acetylmethionine.

Belongs to the ubiquitin-activating E1 family. In terms of assembly, heterodimer of SAE1A or SAE1B and SAE2. The complex binds SUMO proteins via SAE2.

The protein localises to the nucleus. It functions in the pathway protein modification; protein sumoylation. Its function is as follows. The dimeric enzyme acts as an E1 ligase for SUMO1 and SUMO2. It mediates ATP-dependent activation of SUMO proteins and formation of a thioester with a conserved cysteine residue on SAE2. Functionally redundant with its paralog SAE1B. This is SUMO-activating enzyme subunit 1A (SAE1A) from Arabidopsis thaliana (Mouse-ear cress).